Here is a 73-residue protein sequence, read N- to C-terminus: MPKKDGAIEIEGRVVEPLPNAMFRVELQNGHRVLAHISGKMRQHYIRILPEDRVVVELSPYDLSRGRIVYRYK.

In terms of domain architecture, S1-like spans 1–73; the sequence is MPKKDGAIEI…SRGRIVYRYK (73 aa).

The protein belongs to the IF-1 family. As to quaternary structure, component of the 30S ribosomal translation pre-initiation complex which assembles on the 30S ribosome in the order IF-2 and IF-3, IF-1 and N-formylmethionyl-tRNA(fMet); mRNA recruitment can occur at any time during PIC assembly.

It is found in the cytoplasm. One of the essential components for the initiation of protein synthesis. Stabilizes the binding of IF-2 and IF-3 on the 30S subunit to which N-formylmethionyl-tRNA(fMet) subsequently binds. Helps modulate mRNA selection, yielding the 30S pre-initiation complex (PIC). Upon addition of the 50S ribosomal subunit IF-1, IF-2 and IF-3 are released leaving the mature 70S translation initiation complex. The polypeptide is Translation initiation factor IF-1 (Frankia alni (strain DSM 45986 / CECT 9034 / ACN14a)).